A 194-amino-acid chain; its full sequence is Ribosome maturation factor RimM (194 aa).

The PRC barrel domain occupies 113 to 194; that stretch reads DGEYYWIDLI…RIVADWGLDY (82 aa).

It belongs to the RimM family. In terms of assembly, binds ribosomal protein uS19.

It localises to the cytoplasm. Functionally, an accessory protein needed during the final step in the assembly of 30S ribosomal subunit, possibly for assembly of the head region. Essential for efficient processing of 16S rRNA. May be needed both before and after RbfA during the maturation of 16S rRNA. It has affinity for free ribosomal 30S subunits but not for 70S ribosomes. This chain is Ribosome maturation factor RimM, found in Leptothrix cholodnii (strain ATCC 51168 / LMG 8142 / SP-6) (Leptothrix discophora (strain SP-6)).